A 362-amino-acid polypeptide reads, in one-letter code: Vignain (362 aa).

Residues 1–20 (MAMKKLLWVVLSLSLVLGVA) form the signal peptide. Residues 21-126 (NSFDFHEKDL…SGTFMYEKVG (106 aa)) constitute a propeptide, activation peptide. Cystine bridges form between Cys-149–Cys-191, Cys-183–Cys-224, and Cys-282–Cys-334. Cys-152 is a catalytic residue. Residues His-288 and Asn-309 contribute to the active site. N-linked (GlcNAc...) asparagine glycosylation is found at Asn-326 and Asn-346. Residues 353 to 362 (GSLSSPKDEL) constitute a propeptide, removed in mature form. Residues 359–362 (KDEL) carry the Prevents secretion from ER motif.

Belongs to the peptidase C1 family. In terms of processing, the mature protein is not glycosylated. Post-translationally, the precursor stored in the endoplasmic reticulum lumen is processed during the transport to proteins bodies to two dominant mature forms that differ by a single amino acid residue at the N-terminus.

The protein resides in the endoplasmic reticulum lumen. The protein localises to the vacuole. Its subcellular location is the aleurone grain. In terms of biological role, thought to be involved in the hydrolysis of stored seed proteins. In vitro, catalyzes the hydrolysis of proteins, such as azocasein. Shows a preferential cleavage for Asn-|-Xaa in small molecule substrates such as Boc-Asn-|-OPHNO(2). The sequence is that of Vignain from Vigna mungo (Black gram).